The chain runs to 833 residues: Piwi-like protein 2 (833 aa).

The 127-residue stretch at 227 to 353 (RINRVLNDNS…IPGELCFLCG (127 aa)) folds into the PAZ domain. Residues 313 to 338 (PMRRERKKKDEEGVEKEKEKEAPEEK) are disordered. Basic and acidic residues predominate over residues 320-338 (KKDEEGVEKEKEKEAPEEK). The Piwi domain occupies 515 to 815 (KMALVFVPDD…LAELVGKVHK (301 aa)).

Belongs to the argonaute family. Piwi subfamily. Expressed in dividing adult stem cells.

Its function is as follows. Required for the production of functional progeny from adult somatic stem cells (neoblasts). In Schmidtea mediterranea (Freshwater planarian flatworm), this protein is Piwi-like protein 2 (wi-2).